Reading from the N-terminus, the 630-residue chain is 1-deoxy-D-xylulose-5-phosphate synthase (630 aa).

Thiamine diphosphate-binding positions include histidine 87 and 128-130 (GHS). Aspartate 159 provides a ligand contact to Mg(2+). Residues 160-161 (GA), asparagine 188, phenylalanine 295, and glutamate 377 contribute to the thiamine diphosphate site. Asparagine 188 provides a ligand contact to Mg(2+).

This sequence belongs to the transketolase family. DXPS subfamily. In terms of assembly, homodimer. Mg(2+) serves as cofactor. Requires thiamine diphosphate as cofactor.

It catalyses the reaction D-glyceraldehyde 3-phosphate + pyruvate + H(+) = 1-deoxy-D-xylulose 5-phosphate + CO2. Its pathway is metabolic intermediate biosynthesis; 1-deoxy-D-xylulose 5-phosphate biosynthesis; 1-deoxy-D-xylulose 5-phosphate from D-glyceraldehyde 3-phosphate and pyruvate: step 1/1. In terms of biological role, catalyzes the acyloin condensation reaction between C atoms 2 and 3 of pyruvate and glyceraldehyde 3-phosphate to yield 1-deoxy-D-xylulose-5-phosphate (DXP). The polypeptide is 1-deoxy-D-xylulose-5-phosphate synthase (Pseudomonas savastanoi pv. phaseolicola (strain 1448A / Race 6) (Pseudomonas syringae pv. phaseolicola (strain 1448A / Race 6))).